We begin with the raw amino-acid sequence, 323 residues long: ADP/ATP translocase 4 (323 aa).

Residues 1–23 lie on the Mitochondrial intermembrane side of the membrane; it reads MQREPPKRKQEKKVEKGLFDATS. Residues 22 to 114 form a Solcar 1 repeat; that stretch reads TSFGKDLLAG…FAFKDKYKQL (93 aa). The helical transmembrane segment at 24-53 threads the bilayer; it reads FGKDLLAGGVAAAVSKTTVAPIERVKLLLQ. The Mitochondrial matrix segment spans residues 54 to 90; sequence VQASSKQISPEAQYKGIVDCLVRIPREQGFLSYWRGN. A helical membrane pass occupies residues 91-115; that stretch reads LANVIRYFPTQALNFAFKDKYKQLF. Residues arginine 96 and lysine 108 each coordinate ADP. Residues 116-125 are Mitochondrial intermembrane-facing; it reads MSGVNKEKQF. Residues 126 to 146 form a helical membrane-spanning segment; the sequence is WRWFLANLASGGAAGATSLCV. Solcar repeat units lie at residues 127 to 217 and 224 to 311; these read RWFL…VKGL and THFL…IKDL. Residues 147–194 are Mitochondrial matrix-facing; that stretch reads VYPLDFARTRLGADIGKGPEERQFKGLGDCIMKIAKSDGIVGLYQGFG. The chain crosses the membrane as a helical span at residues 195 to 215; sequence VSVQGIIVYRASYFGAYDTVK. Residues 216–226 are Mitochondrial intermembrane-facing; sequence GLLPKPKETHF. A helical membrane pass occupies residues 227–247; sequence LVSFFIAQVVTTCSGILSYPF. The Mitochondrial matrix segment spans residues 248-287; that stretch reads DTVRRRMMMQSGEAERQYKGTLDCFMKIYQQEGIGAFFRG. Arginine 251 contacts ADP. Positions 251 to 256 are important for transport activity; sequence RRRMMM. The Nucleotide carrier signature motif signature appears at 251 to 256; the sequence is RRRMMM. Residues 288 to 305 traverse the membrane as a helical segment; it reads AFSNILRGTGGALVLVLY. Over 306–323 the chain is Mitochondrial intermembrane; sequence DKIKDLLNIDIGGSSSGD.

The protein belongs to the mitochondrial carrier (TC 2.A.29) family. In terms of assembly, monomer.

The protein resides in the mitochondrion inner membrane. The protein localises to the membrane. It localises to the cell projection. Its subcellular location is the cilium. It is found in the flagellum membrane. The catalysed reaction is ADP(in) + ATP(out) = ADP(out) + ATP(in). It catalyses the reaction dATP(out) + ADP(in) = dATP(in) + ADP(out). The enzyme catalyses dADP(in) + ADP(out) = dADP(out) + ADP(in). It carries out the reaction H(+)(in) = H(+)(out). Its activity is regulated as follows. The matrix-open state (m-state) is inhibited by the membrane-permeable bongkrekic acid (BKA). The cytoplasmic-open state (c-state) is inhibited by the membrane-impermeable toxic inhibitor carboxyatractyloside (CATR). Proton transporter activity is inhibited by ADP:ATP antiporter activity. Functionally, ADP:ATP antiporter that mediates import of ADP into the mitochondrial matrix for ATP synthesis, and export of ATP out to fuel the cell. Cycles between the cytoplasmic-open state (c-state) and the matrix-open state (m-state): operates by the alternating access mechanism with a single substrate-binding site intermittently exposed to either the cytosolic (c-state) or matrix (m-state) side of the inner mitochondrial membrane. Specifically required during spermatogenesis, probably to mediate ADP:ATP exchange in spermatocytes. Large ATP supplies from mitochondria may be critical for normal progression of spermatogenesis during early stages of meiotic prophase I, including DNA double-strand break repair and chromosomal synapsis. In addition to its ADP:ATP antiporter activity, also involved in mitochondrial uncoupling and mitochondrial permeability transition pore (mPTP) activity. Plays a role in mitochondrial uncoupling by acting as a proton transporter: proton transport uncouples the proton flows via the electron transport chain and ATP synthase to reduce the efficiency of ATP production and cause mitochondrial thermogenesis. Proton transporter activity is inhibited by ADP:ATP antiporter activity, suggesting that SLC25A31/ANT4 acts as a master regulator of mitochondrial energy output by maintaining a delicate balance between ATP production (ADP:ATP antiporter activity) and thermogenesis (proton transporter activity). Proton transporter activity requires free fatty acids as cofactor, but does not transport it. Among nucleotides, may also exchange ADP for dATP and dADP. Also plays a key role in mPTP opening, a non-specific pore that enables free passage of the mitochondrial membranes to solutes of up to 1.5 kDa, and which contributes to cell death. It is however unclear if SLC25A31/ANT4 constitutes a pore-forming component of mPTP or regulates it. The protein is ADP/ATP translocase 4 of Bos taurus (Bovine).